The chain runs to 29 residues: Pyridoxal 5'-phosphate synthase subunit PdxS (29 aa).

This sequence belongs to the PdxS/SNZ family. In the presence of PdxT, forms a dodecamer of heterodimers.

The catalysed reaction is aldehydo-D-ribose 5-phosphate + D-glyceraldehyde 3-phosphate + L-glutamine = pyridoxal 5'-phosphate + L-glutamate + phosphate + 3 H2O + H(+). Its pathway is cofactor biosynthesis; pyridoxal 5'-phosphate biosynthesis. Functionally, catalyzes the formation of pyridoxal 5'-phosphate from ribose 5-phosphate (RBP), glyceraldehyde 3-phosphate (G3P) and ammonia. The ammonia is provided by the PdxT subunit. Can also use ribulose 5-phosphate and dihydroxyacetone phosphate as substrates, resulting from enzyme-catalyzed isomerization of RBP and G3P, respectively. This Clostridium pasteurianum protein is Pyridoxal 5'-phosphate synthase subunit PdxS.